We begin with the raw amino-acid sequence, 622 residues long: 3-(3-hydroxy-phenyl)propionate/3-hydroxycinnamic acid hydroxylase (622 aa).

FAD contacts are provided by residues 20–49 and 288–298; these read DVAI…VLEK and FRVDRVLLAGD.

This sequence belongs to the PheA/TfdB FAD monooxygenase family. FAD is required as a cofactor.

The catalysed reaction is 3-(3-hydroxyphenyl)propanoate + NADH + O2 + H(+) = 3-(2,3-dihydroxyphenyl)propanoate + NAD(+) + H2O. The enzyme catalyses (2E)-3-(3-hydroxyphenyl)prop-2-enoate + NADH + O2 + H(+) = (2E)-3-(2,3-dihydroxyphenyl)prop-2-enoate + NAD(+) + H2O. It participates in aromatic compound metabolism; 3-phenylpropanoate degradation. In terms of biological role, catalyzes the insertion of one atom of molecular oxygen into position 2 of the phenyl ring of 3-(3-hydroxyphenyl)propionate (3-HPP) and hydroxycinnamic acid (3HCI). The sequence is that of 3-(3-hydroxy-phenyl)propionate/3-hydroxycinnamic acid hydroxylase from Paraburkholderia xenovorans (strain LB400).